The chain runs to 313 residues: Protein KRE1 (313 aa).

An N-terminal signal peptide occupies residues 1–26; sequence MMRRTLLHSFATLLLSLSLWSAAVMA. Repeat unit 1 spans residues 72–86; sequence TTTNDVGTTVTLTQT. The interval 72 to 141 is 2 X approximate repeats; sequence TTTNDVGTTV…LGTTVTLTQT (70 aa). Residues 94–114 are disordered; that stretch reads PTTTTSTSSTGKTTTTVPTAT. Copy 2 of the repeat occupies 127–141; that stretch reads TTTNDLGTTVTLTQT. Residues 147–181 show a composition bias toward low complexity; the sequence is TSATSSASSSVSSSVSSSGSSSSVKTTTSTGSAVA. The tract at residues 147 to 198 is disordered; the sequence is TSATSSASSSVSSSVSSSGSSSSVKTTTSTGSAVAETGTRPDPSTDFTEPPV. Asn288 carries GPI-anchor amidated asparagine lipidation. Positions 289–313 are cleaved as a propeptide — removed in mature form; sequence EAQHLGMSSFTSILGGLLTVLIWFL.

Belongs to the KRE1 family. Extensively modified; probably through addition of O-linked mannose residues. In terms of processing, the GPI-anchor is attached to the protein in the endoplasmic reticulum and serves to target the protein to the cell surface. There, the glucosamine-inositol phospholipid moiety is cleaved off and the GPI-modified mannoprotein is covalently attached via its lipidless GPI glycan remnant to the 1,6-beta-glucan of the outer cell wall layer.

It localises to the cell membrane. The protein localises to the secreted. The protein resides in the cell wall. Its function is as follows. Involved in a late stage of cell wall 1,6-beta-glucan synthesis and assembly. Has a structural, rather than enzymic, function within cell wall 1,6-beta-glucan assembly and architecture, possibly by being involved in covalently cross-linking 1,6-beta-glucans to other cell wall components such as 1,3-beta-glucan, chitin and certain mannoproteins. Acts as the plasma membrane receptor for the yeast K1 viral toxin. This is Protein KRE1 (KRE1) from Saccharomyces cerevisiae (strain ATCC 204508 / S288c) (Baker's yeast).